The chain runs to 206 residues: Reticulon-like protein B13 (206 aa).

Residues 16 to 206 (VEDIYLWRRK…GTEEKVKKSE (191 aa)) enclose the Reticulon domain. The next 3 helical transmembrane spans lie at 27 to 47 (LAFSTLLVSTSTWILLSFYGF), 50 to 70 (ITIVSWIGIAVVSMIFLWGSL), and 134 to 154 (IGNLLDFHTCLFIGLVMGLTV).

The protein resides in the endoplasmic reticulum membrane. The sequence is that of Reticulon-like protein B13 (RTNLB13) from Arabidopsis thaliana (Mouse-ear cress).